The primary structure comprises 445 residues: MLNRRNFIRTTSALAASTALPGYAFGQSGPLRLEITEGVIEPLPFALPTFLAVGGAEDAAADVSRVIAADLRGTGLFRQIPPDAYISQITNFGAPVAYPDWQAINAQALITGQVEARADGQLVVRFRLFDVFSQAPLGEGLQFVGPADSWRRMAHTVADQVYSRITGEGGYFDTRVAFIAEEGPKNARLKRLAIMDYDGANVQFLTDSRSIVLAPRFSPQGDRILYTSYESGFPQVYIMDVATVQRRPLEAIPAETMTFSPRFSPSGQSVVFSLVDGSNTDIYSLDLATGTRRQLTQAPSIETAPSFSPDGSQIVFESDRSGNQQIYIMPADGGEARRVSAGTGRYGTPVWSPRGDYIAFTKQENGRFHIGVMRTDGSDERLLTSSFLDEGPTWAPNGRVIMFTRETPGDDGAPAVYSVDISGRNLQRVATPGMASDPAWSPLQS.

The N-terminal stretch at 1–26 (MLNRRNFIRTTSALAASTALPGYAFG) is a signal peptide.

It belongs to the TolB family. As to quaternary structure, the Tol-Pal system is composed of five core proteins: the inner membrane proteins TolA, TolQ and TolR, the periplasmic protein TolB and the outer membrane protein Pal. They form a network linking the inner and outer membranes and the peptidoglycan layer.

It is found in the periplasm. Functionally, part of the Tol-Pal system, which plays a role in outer membrane invagination during cell division and is important for maintaining outer membrane integrity. This chain is Tol-Pal system protein TolB, found in Jannaschia sp. (strain CCS1).